The primary structure comprises 550 residues: Arginine--tRNA ligase (550 aa).

A 'HIGH' region motif is present at residues 130–140 (ANPTGPIHIGG).

This sequence belongs to the class-I aminoacyl-tRNA synthetase family. In terms of assembly, monomer.

Its subcellular location is the cytoplasm. It catalyses the reaction tRNA(Arg) + L-arginine + ATP = L-arginyl-tRNA(Arg) + AMP + diphosphate. This Mycobacterium sp. (strain JLS) protein is Arginine--tRNA ligase.